The chain runs to 192 residues: uncharacterized protein (192 aa).

Residues 29–160 (HRQAAVLIPI…PLDIYRRGDS (132 aa)) form the Nudix hydrolase domain. The Nudix box motif lies at 67–89 (GAVDDTDASVIAAALREAEEEVA). E83 and E87 together coordinate Mg(2+).

It belongs to the Nudix hydrolase family. PCD1 subfamily. Requires Mn(2+) as cofactor. It depends on Mg(2+) as a cofactor.

Its function is as follows. Probably mediates the hydrolysis of some nucleoside diphosphate derivatives. This is an uncharacterized protein from Shigella sonnei (strain Ss046).